Here is a 279-residue protein sequence, read N- to C-terminus: Protease HtpX homolog (279 aa).

A run of 2 helical transmembrane segments spans residues isoleucine 4–valine 24 and glycine 34–methionine 54. Position 140 (histidine 140) interacts with Zn(2+). The active site involves glutamate 141. Position 144 (histidine 144) interacts with Zn(2+). 2 helical membrane-spanning segments follow: residues leucine 155–isoleucine 175 and phenylalanine 189–tryptophan 209. Glutamate 215 is a binding site for Zn(2+).

Belongs to the peptidase M48B family. It depends on Zn(2+) as a cofactor.

The protein localises to the cell inner membrane. The sequence is that of Protease HtpX homolog from Neisseria gonorrhoeae (strain ATCC 700825 / FA 1090).